The chain runs to 189 residues: Peroxiredoxin sll1621 (189 aa).

In terms of domain architecture, Thioredoxin spans 2-177; that stretch reads TPERVPSVVF…MLAYLKGAEA (176 aa). Catalysis depends on Cys-55, which acts as the Cysteine sulfenic acid (-SOH) intermediate (for peroxiredoxin activity).

It belongs to the peroxiredoxin family. Prx5 subfamily. In terms of assembly, monomer.

The enzyme catalyses a hydroperoxide + 2 glutathione = an alcohol + glutathione disulfide + H2O. In terms of biological role, thiol-specific peroxidase that catalyzes the reduction of hydrogen peroxide and organic hydroperoxides to water and alcohols, respectively. Plays a role in cell protection against oxidative stress by detoxifying peroxides. This chain is Peroxiredoxin sll1621, found in Synechocystis sp. (strain ATCC 27184 / PCC 6803 / Kazusa).